Reading from the N-terminus, the 307-residue chain is Ribosomal RNA small subunit methyltransferase H (307 aa).

S-adenosyl-L-methionine contacts are provided by residues 33 to 35 (GGY), D51, F82, D96, and Q103.

This sequence belongs to the methyltransferase superfamily. RsmH family.

It is found in the cytoplasm. The enzyme catalyses cytidine(1402) in 16S rRNA + S-adenosyl-L-methionine = N(4)-methylcytidine(1402) in 16S rRNA + S-adenosyl-L-homocysteine + H(+). In terms of biological role, specifically methylates the N4 position of cytidine in position 1402 (C1402) of 16S rRNA. This chain is Ribosomal RNA small subunit methyltransferase H, found in Rickettsia africae (strain ESF-5).